We begin with the raw amino-acid sequence, 192 residues long: MGNSRSSALSREVLQELRASTRYTEEELSRWYEGFQRQCPDGRIRCDEFERIYGNFFPNSEPQGYARHVFRSFDTNDDGTLDFREYIIALHLTSSGKTHLKLEWAFSLFDVDRNGEVSKSEVLEIITAIFKMIPEEERLQLPEDENSPQKRADKLWAYFNKGENDKIAEGEFIDGVMKNDAIMRLIQYEPKK.

The N-myristoyl glycine moiety is linked to residue glycine 2. 4 EF-hand domains span residues 24–59 (TEEE…FFPN), 61–96 (EPQG…TSSG), 97–132 (KTHL…IFKM), and 146–181 (NSPQ…KNDA). 13 residues coordinate Ca(2+): aspartate 74, asparagine 76, aspartate 78, threonine 80, glutamate 85, aspartate 110, aspartate 112, asparagine 114, glutamate 116, glutamate 121, asparagine 164, lysine 166, and glutamate 171.

The protein belongs to the recoverin family. In terms of tissue distribution, retinal cell specific protein.

In terms of biological role, seems to be implicated in the pathway from retinal rod guanylate cyclase to rhodopsin. May be involved in the blocking of the phosphorylation of rhodopsin. This is Visinin from Gallus gallus (Chicken).